The primary structure comprises 177 residues: Large ribosomal subunit protein uL6 (177 aa).

It belongs to the universal ribosomal protein uL6 family. In terms of assembly, part of the 50S ribosomal subunit.

Its function is as follows. This protein binds to the 23S rRNA, and is important in its secondary structure. It is located near the subunit interface in the base of the L7/L12 stalk, and near the tRNA binding site of the peptidyltransferase center. This chain is Large ribosomal subunit protein uL6, found in Haemophilus ducreyi (strain 35000HP / ATCC 700724).